The following is a 296-amino-acid chain: Glycerol-3-phosphate dehydrogenase [NAD(P)+] (296 aa).

NADPH is bound by residues tryptophan 12, arginine 31, and lysine 80. Sn-glycerol 3-phosphate-binding residues include lysine 80, glycine 108, and serine 110. Alanine 112 is an NADPH binding site. Residues lysine 162, aspartate 215, serine 225, arginine 226, and asparagine 227 each contribute to the sn-glycerol 3-phosphate site. Lysine 162 serves as the catalytic Proton acceptor. Arginine 226 is a binding site for NADPH. Positions 250 and 252 each coordinate NADPH.

Belongs to the NAD-dependent glycerol-3-phosphate dehydrogenase family.

It localises to the cytoplasm. It catalyses the reaction sn-glycerol 3-phosphate + NAD(+) = dihydroxyacetone phosphate + NADH + H(+). It carries out the reaction sn-glycerol 3-phosphate + NADP(+) = dihydroxyacetone phosphate + NADPH + H(+). It functions in the pathway membrane lipid metabolism; glycerophospholipid metabolism. Its function is as follows. Catalyzes the reduction of the glycolytic intermediate dihydroxyacetone phosphate (DHAP) to sn-glycerol 3-phosphate (G3P), the key precursor for phospholipid synthesis. The polypeptide is Glycerol-3-phosphate dehydrogenase [NAD(P)+] (Sulfurimonas denitrificans (strain ATCC 33889 / DSM 1251) (Thiomicrospira denitrificans (strain ATCC 33889 / DSM 1251))).